Here is a 546-residue protein sequence, read N- to C-terminus: Casein kinase I homolog 2 (546 aa).

2 stretches are compositionally biased toward polar residues: residues 1-33 (MSQV…SNVR) and 44-55 (HVSSNLNHNTGN). Residues 1–67 (MSQVQSPLTA…ASYSGSQSRD (67 aa)) are disordered. Ser-2 carries the N-acetylserine modification. One can recognise a Protein kinase domain in the interval 76–360 (YKIGKKIGEG…ETADGQYDWM (285 aa)). Residues 82-90 (IGEGSFGVL) and Lys-105 contribute to the ATP site. Asp-195 (proton acceptor) is an active-site residue. 2 disordered regions span residues 373–425 (NKKP…QAQA) and 443–546 (QQAN…LGCC). A compositionally biased stretch (low complexity) spans 412–425 (QQQQQQQAQAQAQA). The span at 453 to 465 (DDSHYDEEREASK) shows a compositional bias: basic and acidic residues. Residue Ser-455 is modified to Phosphoserine. Residue Lys-465 forms a Glycyl lysine isopeptide (Lys-Gly) (interchain with G-Cter in ubiquitin) linkage. A compositionally biased stretch (low complexity) spans 475-496 (QQQTQQKYAQQQQKQMQQKSKQ). Over residues 497-530 (FANTGANGQTNKYPYNAQPTANDEQNAKNAAQDR) the composition is skewed to polar residues. Over residues 533–546 (NKSSKGFFSKLGCC) the composition is skewed to low complexity. S-palmitoyl cysteine attachment occurs at residues Cys-545 and Cys-546.

It belongs to the protein kinase superfamily. CK1 Ser/Thr protein kinase family. Casein kinase I subfamily. Post-translationally, palmitoylated by AKR1, which is required for proper plasma membrane localization of YCK2.

It localises to the cell membrane. It carries out the reaction L-seryl-[protein] + ATP = O-phospho-L-seryl-[protein] + ADP + H(+). The enzyme catalyses L-threonyl-[protein] + ATP = O-phospho-L-threonyl-[protein] + ADP + H(+). In terms of biological role, casein kinases are operationally defined by their preferential utilization of acidic proteins such as caseins as substrates. In Saccharomyces cerevisiae (strain ATCC 204508 / S288c) (Baker's yeast), this protein is Casein kinase I homolog 2 (YCK2).